A 235-amino-acid chain; its full sequence is NADH-quinone oxidoreductase subunit C (235 aa).

Belongs to the complex I 30 kDa subunit family. In terms of assembly, NDH-1 is composed of 14 different subunits. Subunits NuoB, C, D, E, F, and G constitute the peripheral sector of the complex.

It localises to the cell membrane. It carries out the reaction a quinone + NADH + 5 H(+)(in) = a quinol + NAD(+) + 4 H(+)(out). In terms of biological role, NDH-1 shuttles electrons from NADH, via FMN and iron-sulfur (Fe-S) centers, to quinones in the respiratory chain. The immediate electron acceptor for the enzyme in this species is believed to be a menaquinone. Couples the redox reaction to proton translocation (for every two electrons transferred, four hydrogen ions are translocated across the cytoplasmic membrane), and thus conserves the redox energy in a proton gradient. This is NADH-quinone oxidoreductase subunit C from Mycolicibacterium paratuberculosis (strain ATCC BAA-968 / K-10) (Mycobacterium paratuberculosis).